The following is a 152-amino-acid chain: Early glycoprotein GP48 (152 aa).

The first 25 residues, 1–25 (MVMMLRTWRLLPMVLLAAYCYCVFG), serve as a signal peptide directing secretion. Asparagine 48, asparagine 53, asparagine 61, asparagine 69, asparagine 108, asparagine 112, asparagine 122, asparagine 139, and asparagine 148 each carry an N-linked (GlcNAc...) asparagine; by host glycan.

It belongs to the RL11 family. N-glycosylated and possibly O-glycosylated.

The protein resides in the virion membrane. The protein is Early glycoprotein GP48 (UL4) of Homo sapiens (Human).